A 222-amino-acid polypeptide reads, in one-letter code: Putative N-acetylmannosamine-6-phosphate 2-epimerase (222 aa).

This sequence belongs to the NanE family.

It catalyses the reaction an N-acyl-D-glucosamine 6-phosphate = an N-acyl-D-mannosamine 6-phosphate. Its pathway is amino-sugar metabolism; N-acetylneuraminate degradation; D-fructose 6-phosphate from N-acetylneuraminate: step 3/5. Its function is as follows. Converts N-acetylmannosamine-6-phosphate (ManNAc-6-P) to N-acetylglucosamine-6-phosphate (GlcNAc-6-P). The polypeptide is Putative N-acetylmannosamine-6-phosphate 2-epimerase (Staphylococcus aureus (strain Mu3 / ATCC 700698)).